Here is a 265-residue protein sequence, read N- to C-terminus: Probable FAD synthase (265 aa).

This sequence belongs to the PAPS reductase family. FAD1 subfamily.

The enzyme catalyses FMN + ATP + H(+) = FAD + diphosphate. Its pathway is cofactor biosynthesis; FAD biosynthesis; FAD from FMN: step 1/1. Its function is as follows. Adenylates FMN to FAD. This chain is Probable FAD synthase, found in Schizosaccharomyces pombe (strain 972 / ATCC 24843) (Fission yeast).